A 732-amino-acid polypeptide reads, in one-letter code: uncharacterized protein (732 aa).

Disordered stretches follow at residues 38 to 90 (TTLA…NNNK) and 226 to 629 (EESP…MDYQ). The segment covering 47-56 (QQQQQQQQQQ) has biased composition (low complexity). Over residues 57–76 (PPSSSTTKEGGATTTQDNKL) the composition is skewed to polar residues. Composition is skewed to low complexity over residues 77-89 (TANG…NNNN), 231-247 (TTTT…TTAA), and 254-318 (TTTT…GTNS). A compositionally biased stretch (basic residues) spans 327 to 338 (KAKKGVPKKAPT). Low complexity-rich tracts occupy residues 339–383 (KKQP…APKT), 401–421 (KTSK…STTK), and 487–523 (SAST…IKSK). A compositionally biased stretch (acidic residues) spans 553 to 566 (AAAEEQEEEEEEDN). Low complexity-rich tracts occupy residues 567–577 (SNGIQNNNSSN) and 593–609 (DNFS…NGLL). Acidic residues predominate over residues 610 to 621 (SEDDDDDDDDDN).

This is an uncharacterized protein from Dictyostelium discoideum (Social amoeba).